A 173-amino-acid polypeptide reads, in one-letter code: Large ribosomal subunit protein uL18 (173 aa).

It belongs to the universal ribosomal protein uL18 family. Part of the 50S ribosomal subunit. Contacts the 5S and 23S rRNAs.

Its function is as follows. This is one of the proteins that bind and probably mediate the attachment of the 5S RNA into the large ribosomal subunit, where it forms part of the central protuberance. This chain is Large ribosomal subunit protein uL18, found in Methanococcoides burtonii (strain DSM 6242 / NBRC 107633 / OCM 468 / ACE-M).